A 976-amino-acid polypeptide reads, in one-letter code: Dolichyl-phosphooligosaccharide-protein glycotransferase 1 (976 aa).

The Cytoplasmic segment spans residues Met-1 to Thr-21. Residues Tyr-22–Phe-42 form a helical membrane-spanning segment. Residues Tyr-43–Glu-112 are Extracellular-facing. The DXD motif 1 signature appears at Asp-55–Asp-57. A Mn(2+)-binding site is contributed by Asp-57. The helical transmembrane segment at Leu-113–Leu-133 threads the bilayer. The Cytoplasmic segment spans residues Leu-134–Gly-135. A helical transmembrane segment spans residues Arg-136 to Ala-156. Over Asn-157 to Asn-165 the chain is Extracellular. A helical transmembrane segment spans residues Ala-166–Tyr-186. Residues Arg-167 and Asp-169 each contribute to the Mn(2+) site. Positions Arg-167 to Asp-169 match the DXD motif 2 motif. Topologically, residues Leu-187–Thr-193 are cytoplasmic. The chain crosses the membrane as a helical span at residues Arg-194–Asn-214. Gly-215 is a topological domain (extracellular). The helical transmembrane segment at Ser-216–Ile-236 threads the bilayer. Residues Phe-237 to Val-247 lie on the Cytoplasmic side of the membrane. Residues Lys-248 to Gly-268 traverse the membrane as a helical segment. A topological domain (extracellular) is located at residue Ile-269. A helical membrane pass occupies residues Val-270–Leu-290. The Cytoplasmic segment spans residues Val-291–Lys-306. A helical transmembrane segment spans residues His-307–Val-327. At Gly-328–Lys-360 the chain is on the extracellular side. The TIXE motif signature appears at Thr-347–Glu-350. Residues Ala-361–Leu-381 traverse the membrane as a helical segment. Topologically, residues Ile-382–Lys-396 are cytoplasmic. The chain crosses the membrane as a helical span at residues Ser-397–Leu-417. Ala-418 is a topological domain (extracellular). The helical transmembrane segment at Val-419–Phe-439 threads the bilayer. An a glycophospholipid-binding site is contributed by Arg-420. At Ser-440–Ile-453 the chain is on the cytoplasmic side. The helical transmembrane segment at Lys-454–Pro-474 threads the bilayer. Residues Val-475–Glu-976 lie on the Extracellular side of the membrane. The segment at Trp-513–Asp-515 is interacts with target acceptor peptide in protein substrate. The short motif at Trp-513–Gly-517 is the WWDYG motif element. An a glycophospholipid-binding site is contributed by Tyr-518. The short motif at Asp-573–Ile-580 is the DK motif element.

Belongs to the STT3 family. Mn(2+) is required as a cofactor. It depends on Mg(2+) as a cofactor.

Its subcellular location is the cell membrane. It carries out the reaction an archaeal dolichyl phosphooligosaccharide + [protein]-L-asparagine = an archaeal dolichyl phosphate + a glycoprotein with the oligosaccharide chain attached by N-beta-D-glycosyl linkage to a protein L-asparagine.. The protein operates within protein modification; protein glycosylation. Oligosaccharyl transferase (OST) that catalyzes the initial transfer of a defined glycan (ManNAcXyl(2)GlcAMan(2)GalNAc in Pyrococcus) from the lipid carrier dolichol-monophosphate to an asparagine residue within an Asn-X-Ser/Thr consensus motif in nascent polypeptide chains, the first step in protein N-glycosylation. The chain is Dolichyl-phosphooligosaccharide-protein glycotransferase 1 (aglB1) from Pyrococcus horikoshii (strain ATCC 700860 / DSM 12428 / JCM 9974 / NBRC 100139 / OT-3).